The sequence spans 314 residues: Ferrochelatase (314 aa).

Positions 188 and 269 each coordinate Fe cation.

The protein belongs to the ferrochelatase family.

The protein resides in the cytoplasm. It catalyses the reaction heme b + 2 H(+) = protoporphyrin IX + Fe(2+). The protein operates within porphyrin-containing compound metabolism; protoheme biosynthesis; protoheme from protoporphyrin-IX: step 1/1. Catalyzes the ferrous insertion into protoporphyrin IX. This Campylobacter fetus subsp. fetus (strain 82-40) protein is Ferrochelatase.